A 386-amino-acid chain; its full sequence is F420 non-reducing hydrogenase I small subunit (386 aa).

The segment at residues 1–51 (MVEMSTGTTNLVRTLDSMDFLKMDRRTFMKAVSALGATAFLGTYQTEIVNA) is a signal peptide (tat-type signal). [4Fe-4S] cluster contacts are provided by C67, C70, C178, C227, H273, C276, C296, and C302. The [3Fe-4S] cluster site is built by C311, C330, and C333.

The protein belongs to the [NiFe]/[NiFeSe] hydrogenase small subunit family. As to quaternary structure, composed of a large subunit (VhoA), a small subunit (VhoG) and a cytochrome subunit (VhoC). [4Fe-4S] cluster serves as cofactor. The cofactor is [3Fe-4S] cluster. Predicted to be exported by the Tat system. The position of the signal peptide cleavage has not been experimentally proven.

It is found in the cell membrane. It catalyses the reaction methanophenazine + H2 = dihydromethanophenazine. Part of the F420 non-reducing hydrogenase I complex that catalyzes the reduction of methanophenazine to dihydromethanophenazine. In Methanosarcina mazei (strain ATCC BAA-159 / DSM 3647 / Goe1 / Go1 / JCM 11833 / OCM 88) (Methanosarcina frisia), this protein is F420 non-reducing hydrogenase I small subunit.